A 384-amino-acid chain; its full sequence is Cell division protein FtsZ (384 aa).

GTP is bound by residues 20 to 24 (GGGGN), 107 to 109 (GTG), E138, R142, and N186.

Belongs to the FtsZ family. As to quaternary structure, homodimer. Polymerizes to form a dynamic ring structure in a strictly GTP-dependent manner. Interacts directly with several other division proteins.

The protein resides in the cytoplasm. Functionally, essential cell division protein that forms a contractile ring structure (Z ring) at the future cell division site. The regulation of the ring assembly controls the timing and the location of cell division. One of the functions of the FtsZ ring is to recruit other cell division proteins to the septum to produce a new cell wall between the dividing cells. Binds GTP and shows GTPase activity. The chain is Cell division protein FtsZ from Wigglesworthia glossinidia brevipalpis.